A 261-amino-acid polypeptide reads, in one-letter code: Maspardin (261 aa).

In terms of domain architecture, AB hydrolase-1 spans 87–159 (FCDGFRKLLD…NSFWLMPAFM (73 aa)). At Ser257 the chain carries Phosphoserine.

This sequence belongs to the AB hydrolase superfamily. Interacts with CD4. Interacts with ALDH16A1.

It is found in the cytoplasm. Functionally, may play a role as a negative regulatory factor in CD4-dependent T-cell activation. The chain is Maspardin (Spg21) from Rattus norvegicus (Rat).